Reading from the N-terminus, the 568-residue chain is Sulfite reductase [NADPH] hemoprotein beta-component (568 aa).

Positions 426, 432, 471, and 475 each coordinate [4Fe-4S] cluster. Residue Cys475 participates in siroheme binding.

This sequence belongs to the nitrite and sulfite reductase 4Fe-4S domain family. In terms of assembly, alpha(8)-beta(8). The alpha component is a flavoprotein, the beta component is a hemoprotein. Requires siroheme as cofactor. [4Fe-4S] cluster is required as a cofactor.

It carries out the reaction hydrogen sulfide + 3 NADP(+) + 3 H2O = sulfite + 3 NADPH + 4 H(+). The protein operates within sulfur metabolism; hydrogen sulfide biosynthesis; hydrogen sulfide from sulfite (NADPH route): step 1/1. Functionally, component of the sulfite reductase complex that catalyzes the 6-electron reduction of sulfite to sulfide. This is one of several activities required for the biosynthesis of L-cysteine from sulfate. This Xylella fastidiosa (strain M23) protein is Sulfite reductase [NADPH] hemoprotein beta-component.